A 426-amino-acid polypeptide reads, in one-letter code: Mediator of RNA polymerase II transcription subunit 4 (426 aa).

The disordered stretch occupies residues 1–56; sequence MLQHQIVQSPARLGLTGPGSPSVQNPTPTRHGHPTSSSSSQSQHQQIQQQPNLLPS. A compositionally biased stretch (polar residues) spans 19–28; it reads GSPSVQNPTP. Positions 36-56 are enriched in low complexity; that stretch reads SSSSSQSQHQQIQQQPNLLPS. Positions 160–212 form a coiled coil; that stretch reads TELQEILDLQDAKQKVAREIKSKDSSLLAFANKLKDAERVLDMLVDDYSDYRK. 2 disordered regions span residues 214-236 and 373-426; these read KRSK…STTV and IAAP…DDED. Acidic residues predominate over residues 406 to 426; the sequence is ILEDDDSSDYSSDDASSDDED.

Belongs to the Mediator complex subunit 4 family. In terms of assembly, component of the Mediator complex.

It is found in the nucleus. Its function is as follows. Component of the Mediator complex, a coactivator involved in the regulated transcription of nearly all RNA polymerase II-dependent genes. Mediator functions as a bridge to convey information from gene-specific regulatory proteins to the basal RNA polymerase II transcription machinery. The Mediator complex, having a compact conformation in its free form, is recruited to promoters by direct interactions with regulatory proteins and serves for the assembly of a functional preinitiation complex with RNA polymerase II and the general transcription factors. The protein is Mediator of RNA polymerase II transcription subunit 4 (MED4) of Arabidopsis thaliana (Mouse-ear cress).